The primary structure comprises 682 residues: MISSYGDVDMELRDEDLILEEVRDYLTAYLRNIHQEDIILDNERVVVDLNQLYNYGLMEFVEFLINNPQKGIDFIKECYNDAYYTLRNEYPTNVIIAVKNLPKIFKTTRKGKIFTIEDIRSKTLGKLVEFEGIIVMASKIRPMLKKAYYICPKCGREVVREIDILNTDSEKAVCECGAELNLIEHKSIYTDFQEIKVQQPLDLMENPEEPPKYITVFLENSPGIYAGRVKITGIPIKVKKSKKLPIYDIHVKALHCEVLDGEVKIKLTNSDIENIKKIAKRKDVVNILADRLIPEIKGHSAIKKAVLLQQIKGVKKPGKRADIHILLITDPGIGKTVILRKIAEIPGNLYGSVTTATGVGLTAAVVREKTEIGEDTWVIKPGLLVKAHKGTACIDELTVNKELQSYVLEAMESQTIHISKGGINAKLPAECAILAACNPRWGRFNPEVSVAEQINIPAPLLSRFDLIFPIRDVSDKDKDKDIAEYIVDLHRAYLDEKINREMGLDYLEVDGVKIDKEFIIKYIYYARQKKPIISEKAKELFVNYYVEMRKKHQITARQLEAAIRIAEAHAKAKLKDVVDEEDAKEAINIITECLKEIAYDPETGIFDVDKILGVSKKERDKLTTVYEIIKELSEKSELVEHEDIAEEAKKKGIKEDELENIIKKLIKYGDIDEPKPGRYRLL.

The MCM domain occupies 284 to 487 (VVNILADRLI…KDKDIAEYIV (204 aa)). 329–336 (TDPGIGKT) contributes to the ATP binding site.

The protein belongs to the MCM family.

This is an uncharacterized protein from Methanocaldococcus jannaschii (strain ATCC 43067 / DSM 2661 / JAL-1 / JCM 10045 / NBRC 100440) (Methanococcus jannaschii).